A 173-amino-acid polypeptide reads, in one-letter code: Large ribosomal subunit protein uL16 (173 aa).

Belongs to the universal ribosomal protein uL16 family.

The protein is Large ribosomal subunit protein uL16 of Methanococcus aeolicus (strain ATCC BAA-1280 / DSM 17508 / OCM 812 / Nankai-3).